The following is a 674-amino-acid chain: ATP-dependent DNA helicase Hel308 (674 aa).

ATP contacts are provided by residues glutamine 27 and 44–51 (VPTAAGKT). The 167-residue stretch at 31–197 (IEQIRKGRNV…WLDASLIKSD (167 aa)) folds into the Helicase ATP-binding domain. The DEAH box signature appears at 142–145 (DEIH). A Helicase C-terminal domain is found at 224 to 411 (SINQIIRETV…EAKVRFNTLA (188 aa)).

The protein belongs to the helicase family. Hel308 subfamily. As to quaternary structure, monomer.

The enzyme catalyses Couples ATP hydrolysis with the unwinding of duplex DNA by translocating in the 3'-5' direction.. It carries out the reaction ATP + H2O = ADP + phosphate + H(+). Functionally, DNA-dependent ATPase and 3'-5' DNA helicase that may be involved in repair of stalled replication forks. In Thermoplasma acidophilum (strain ATCC 25905 / DSM 1728 / JCM 9062 / NBRC 15155 / AMRC-C165), this protein is ATP-dependent DNA helicase Hel308.